The primary structure comprises 780 residues: Aconitate hydratase, mitochondrial (780 aa).

A mitochondrion-targeting transit peptide spans 1–27 (MAPYSLLVSRLQKALGARQYHVASVLC). At lysine 31 the chain carries N6-succinyllysine. Lysine 50 carries the post-translational modification N6-acetyllysine; alternate. An N6-succinyllysine; alternate modification is found at lysine 50. Glutamine 99 lines the substrate pocket. An N6-acetyllysine; alternate mark is found at lysine 138 and lysine 144. N6-succinyllysine; alternate occurs at positions 138 and 144. 192–194 (DSH) is a substrate binding site. Lysine 233 bears the N6-acetyllysine; alternate mark. Lysine 233 is subject to N6-succinyllysine; alternate. Cysteine 385 contacts [4Fe-4S] cluster. Lysine 411 bears the N6-succinyllysine mark. [4Fe-4S] cluster is bound by residues cysteine 448 and cysteine 451. Residues arginine 474 and arginine 479 each contribute to the substrate site. N6-acetyllysine; alternate is present on residues lysine 517 and lysine 523. 2 positions are modified to N6-succinyllysine; alternate: lysine 517 and lysine 523. A compositionally biased stretch (basic and acidic residues) spans 524–537 (LEAPDADELPRAEF). Residues 524 to 560 (LEAPDADELPRAEFDPGQDTYQHPPKDSSGQQVDVSP) form a disordered region. An N6-succinyllysine modification is found at lysine 549. Positions 551 to 560 (SSGQQVDVSP) are enriched in polar residues. At serine 559 the chain carries Phosphoserine. Position 573 is an N6-acetyllysine; alternate (lysine 573). Lysine 573 is subject to N6-succinyllysine; alternate. Position 591 is an N6-succinyllysine (lysine 591). Residue lysine 605 is modified to N6-acetyllysine; alternate. Lysine 605 carries the post-translational modification N6-succinyllysine; alternate. Arginine 607 contacts substrate. N6-succinyllysine is present on lysine 628. The residue at position 670 (serine 670) is a Phosphoserine. 670 to 671 (SR) is a substrate binding site. The residue at position 689 (lysine 689) is an N6-succinyllysine. N6-acetyllysine; alternate is present on residues lysine 723 and lysine 730. N6-succinyllysine; alternate occurs at positions 723 and 730. N6-acetyllysine is present on residues lysine 736 and lysine 743.

Belongs to the aconitase/IPM isomerase family. Monomer. The cofactor is [4Fe-4S] cluster. Post-translationally, forms covalent cross-links mediated by transglutaminase TGM2, between a glutamine and the epsilon-amino group of a lysine residue, forming homopolymers and heteropolymers.

The protein localises to the mitochondrion. The catalysed reaction is citrate = D-threo-isocitrate. It participates in carbohydrate metabolism; tricarboxylic acid cycle; isocitrate from oxaloacetate: step 2/2. Catalyzes the isomerization of citrate to isocitrate via cis-aconitate. The polypeptide is Aconitate hydratase, mitochondrial (ACO2) (Bos taurus (Bovine)).